We begin with the raw amino-acid sequence, 124 residues long: Large ribosomal subunit protein bL17 (124 aa).

Belongs to the bacterial ribosomal protein bL17 family. In terms of assembly, part of the 50S ribosomal subunit. Contacts protein L32.

The protein is Large ribosomal subunit protein bL17 of Borrelia turicatae (strain 91E135).